The sequence spans 885 residues: DNA mismatch repair protein MutS (885 aa).

An ATP-binding site is contributed by 626–633; the sequence is GPNMGGKS.

Belongs to the DNA mismatch repair MutS family.

In terms of biological role, this protein is involved in the repair of mismatches in DNA. It is possible that it carries out the mismatch recognition step. This protein has a weak ATPase activity. The sequence is that of DNA mismatch repair protein MutS from Burkholderia cenocepacia (strain ATCC BAA-245 / DSM 16553 / LMG 16656 / NCTC 13227 / J2315 / CF5610) (Burkholderia cepacia (strain J2315)).